We begin with the raw amino-acid sequence, 257 residues long: Hydroxyacylglutathione hydrolase (257 aa).

Zn(2+)-binding residues include histidine 54, histidine 56, aspartate 58, histidine 59, histidine 109, aspartate 129, and histidine 167.

Belongs to the metallo-beta-lactamase superfamily. Glyoxalase II family. Monomer. Zn(2+) serves as cofactor.

It carries out the reaction an S-(2-hydroxyacyl)glutathione + H2O = a 2-hydroxy carboxylate + glutathione + H(+). It functions in the pathway secondary metabolite metabolism; methylglyoxal degradation; (R)-lactate from methylglyoxal: step 2/2. Functionally, thiolesterase that catalyzes the hydrolysis of S-D-lactoyl-glutathione to form glutathione and D-lactic acid. The chain is Hydroxyacylglutathione hydrolase from Marinomonas sp. (strain MWYL1).